A 284-amino-acid polypeptide reads, in one-letter code: Diaminopimelate epimerase (284 aa).

3 residues coordinate substrate: Asn20, Gln53, and Asn73. The active-site Proton donor is Cys82. Residues 83–84, Asn167, Asn200, and 218–219 contribute to the substrate site; these read GN and ER. Cys227 acts as the Proton acceptor in catalysis. A substrate-binding site is contributed by 228–229; it reads GS.

The protein belongs to the diaminopimelate epimerase family. As to quaternary structure, homodimer.

The protein resides in the cytoplasm. It carries out the reaction (2S,6S)-2,6-diaminopimelate = meso-2,6-diaminopimelate. It functions in the pathway amino-acid biosynthesis; L-lysine biosynthesis via DAP pathway; DL-2,6-diaminopimelate from LL-2,6-diaminopimelate: step 1/1. In terms of biological role, catalyzes the stereoinversion of LL-2,6-diaminopimelate (L,L-DAP) to meso-diaminopimelate (meso-DAP), a precursor of L-lysine and an essential component of the bacterial peptidoglycan. This is Diaminopimelate epimerase from Xylella fastidiosa (strain 9a5c).